Consider the following 350-residue polypeptide: Purine-binding protein BAB2_0673 (350 aa).

The N-terminal stretch at 1–17 is a signal peptide; the sequence is MVIATVAGFMLGGAAHA. Tryptophan 36, tryptophan 185, and aspartate 211 together coordinate adenine.

Belongs to the BMP lipoprotein family.

In terms of biological role, binds adenine and probably also other purines, such as guanine. May play a role in adenine and guanine uptake. May be part of an ABC-type uptake system for adenine and similar ligands. This chain is Purine-binding protein BAB2_0673, found in Brucella abortus (strain 2308).